The following is a 304-amino-acid chain: Putative S-adenosyl-L-methionine-dependent methyltransferase MAV_4444 (304 aa).

S-adenosyl-L-methionine contacts are provided by residues Asp130 and 159–160 (DL).

The protein belongs to the UPF0677 family.

Functionally, exhibits S-adenosyl-L-methionine-dependent methyltransferase activity. The polypeptide is Putative S-adenosyl-L-methionine-dependent methyltransferase MAV_4444 (Mycobacterium avium (strain 104)).